Here is a 903-residue protein sequence, read N- to C-terminus: Centrobin (903 aa).

The segment covering Met1–Ser10 has biased composition (polar residues). The segment at Met1 to Val34 is disordered. The residue at position 80 (Ser80) is a Phosphoserine. 6 disordered regions span residues Leu110–Ser140, Leu471–Gln493, Leu568–Arg597, Ser669–Ala704, Arg772–Thr799, and Ser837–Arg903. Positions Arg196–His560 form a coiled coil. A required for centrosome localization region spans residues Gln365–Arg903. The segment covering Leu572–Gln590 has biased composition (pro residues). The span at His675 to Pro685 shows a compositional bias: basic and acidic residues. The span at Ser778–Pro791 shows a compositional bias: low complexity. A Phosphoserine modification is found at Ser790. A compositionally biased stretch (basic and acidic residues) spans Ser837–Ile863.

Interacts with LYST. As to expression, widely expressed (at protein level). Highly expressed in testis. Also expressed in spleen, thymus, prostate, small intestine, colon and peripheral blood leukocytes.

It is found in the cytoplasm. It localises to the cytoskeleton. Its subcellular location is the microtubule organizing center. The protein localises to the centrosome. The protein resides in the centriole. In terms of biological role, required for centriole duplication. Inhibition of centriole duplication leading to defects in cytokinesis. This chain is Centrobin (CNTROB), found in Homo sapiens (Human).